A 256-amino-acid polypeptide reads, in one-letter code: MYYGFDMGGTKIELGVFDENLQRIWHKRVPTPREDYPQLLQILRDLTEEADTYCGVQGSVGIGIPGLPNADDGTVFTANVPSAMGQPLQADLSRLIQREVRIDNDANCFALSEAWDPEFRTYPTVLGLILGTGVGGGLIVNGSIVSGRNHITGEFGHFRLPVDALDILGADIPRVPCGCGHRGCIENYISGRGFEWMYSHFYQHTLPATDIIAHYAAGEPKAVAHVERFMDVLAVCLGNLLTMLGSPFGRGGWGVV.

Residues 4 to 11 (GFDMGGTK) and 133 to 140 (GVGGGLIV) contribute to the ATP site. His157, Cys177, Cys179, and Cys184 together coordinate Zn(2+).

This sequence belongs to the ROK (NagC/XylR) family. NagK subfamily.

The enzyme catalyses N-acetyl-D-glucosamine + ATP = N-acetyl-D-glucosamine 6-phosphate + ADP + H(+). It participates in cell wall biogenesis; peptidoglycan recycling. In terms of biological role, catalyzes the phosphorylation of N-acetyl-D-glucosamine (GlcNAc) derived from cell-wall degradation, yielding GlcNAc-6-P. The protein is N-acetyl-D-glucosamine kinase (nagK) of Yersinia pestis bv. Antiqua (strain Nepal516).